Here is a 187-residue protein sequence, read N- to C-terminus: Dihydrofolate reductase (187 aa).

The DHFR domain occupies 4 to 185; the sequence is PLNCIVAVSQ…IKYKFEVYEK (182 aa). NADP(+) contacts are provided by residues Ala-10 and 16 to 22; that span reads GIGKNGD. 31-36 is a substrate binding site; that stretch reads EFKYFQ. The residue at position 33 (Lys-33) is an N6-acetyllysine; alternate. The residue at position 33 (Lys-33) is an N6-succinyllysine; alternate. NADP(+) is bound at residue 55–57; the sequence is RKT. Asn-65 and Arg-71 together coordinate substrate. NADP(+)-binding positions include 77–79 and 117–124; these read SRE and GGSSVYQE.

It belongs to the dihydrofolate reductase family. In terms of assembly, homodimer.

Its subcellular location is the mitochondrion. It localises to the cytoplasm. The enzyme catalyses (6S)-5,6,7,8-tetrahydrofolate + NADP(+) = 7,8-dihydrofolate + NADPH + H(+). It participates in cofactor biosynthesis; tetrahydrofolate biosynthesis; 5,6,7,8-tetrahydrofolate from 7,8-dihydrofolate: step 1/1. Functionally, key enzyme in folate metabolism. Contributes to the de novo mitochondrial thymidylate biosynthesis pathway. Catalyzes an essential reaction for de novo glycine and purine synthesis, and for DNA precursor synthesis. Binds its own mRNA. In Mus musculus (Mouse), this protein is Dihydrofolate reductase (Dhfr).